The following is a 568-amino-acid chain: Lariat debranching enzyme (568 aa).

The a divalent metal cation site is built by Cys8, His10, Asp39, and Asn84. Residues 124 to 154 are lariat recognition loop; that stretch reads SGIFKSHDFKKGHFEFPPYNPETLRSVYHIR. A divalent metal cation contacts are provided by His174, His226, and His228. Residues 388–568 are disordered; that stretch reads IYGERGGKGA…TAVEDEESDS (181 aa). Residues 417-428 show a composition bias toward polar residues; it reads PSDTSGLSSSYN. A compositionally biased stretch (acidic residues) spans 432–444; that stretch reads ITIEDEWEEEEDG. A compositionally biased stretch (basic and acidic residues) spans 467-480; sequence DSDRDSSPQRETAK. Residue Thr478 is modified to Phosphothreonine. Low complexity predominate over residues 534 to 549; the sequence is GETTQSSAGQTGGTPQ. Residue Ser568 is modified to Phosphoserine.

Belongs to the lariat debranching enzyme family. It depends on Fe(2+) as a cofactor. Zn(2+) is required as a cofactor. Requires Mn(2+) as cofactor.

The protein localises to the nucleus. Its activity is regulated as follows. Active in presence of diverse metals including Fe(2+), Zn(2+), Mn(2+). Also activated by Ca(2+). Binds two metal cations in two adjacent alpha and beta metal-binding pockets. Cleaves the 2'-5' phosphodiester linkage at the branch point of excised lariat intron RNA and converts them into linear molecules that can be subsequently degraded, thereby facilitating ribonucleotide turnover. Linked to its role in pre-mRNA processing mechanism, may also participate in retrovirus replication and have an antiviral cell-intrinsic defense function. This chain is Lariat debranching enzyme (dbr1), found in Danio rerio (Zebrafish).